The sequence spans 283 residues: (+)-borneol dehydrogenase 2 (283 aa).

Residues 27–33, Asp-51, 76–77, and 103–105 each bind NAD(+); these read GGSSGIG, DV, and NAG. Catalysis depends on Ser-157, which acts as the Proton donor. The NAD(+) site is built by Tyr-170, Lys-174, and Thr-205. Residue Tyr-170 is the Proton acceptor of the active site. The active-site Proton donor/acceptor is the Lys-174.

This sequence belongs to the short-chain dehydrogenases/reductases (SDR) family.

It catalyses the reaction (1R,2S,4R)-borneol + NAD(+) = (1R,4R)-camphor + NADH + H(+). Its function is as follows. Involved in the biosynthesis of monoterpene natural products related to camphor. Catalayzes the oxidation of (+)-borneol to (+)-camphor. Shows absolute selectivity towards (+)-borneol. Catalyzes the oxidation of (+)-isoborneol to (-)-camphor. Shows absolute selectivity towards (+)-isoborneol. In Salvia officinalis (Sage), this protein is (+)-borneol dehydrogenase 2.